The sequence spans 193 residues: Interleukin-18 (193 aa).

Residues 1-36 (MAAEQVEDNCISFVEMKFINNTLYFVAENDEDLESD) constitute a propeptide that is removed on maturation.

This sequence belongs to the IL-1 family. In terms of assembly, forms a ternary complex with ligand-binding receptor subunit IL18R1 and signaling receptor subunit IL18RAP at the plasma membrane. Mature IL18 first binds to IL18R1 forming a low affinity binary complex, which then interacts with IL18RAP to form a high affinity ternary complex that signals inside the cell. Interacts with cargo receptor TMED10; the interaction mediates the translocation from the cytoplasm into the ERGIC (endoplasmic reticulum-Golgi intermediate compartment) and thereby secretion. The pro-IL-18 precursor is processed by CASP1, CASP4 or CASP5 to yield its mature, active form. The pro-IL-18 precursor features autoinhibitory interactions between the propeptide and the post-cleavage-site region, preventing recognition by the IL18R1 receptor. Processing by CASP1, CASP4 or CASP5 induces conformational changes to generate critical receptor-binding sites. The mature form is then secreted and released in the extracellular milieu by passing through the gasdermin-D (GSDMD) pore. In contrast, cleavage by CASP3 inactivates IL18.

The protein localises to the cytoplasm. It is found in the cytosol. It localises to the secreted. In terms of biological role, pro-inflammatory cytokine primarily involved in epithelial barrier repair, polarized T-helper 1 (Th1) cell and natural killer (NK) cell immune responses. Upon binding to IL18R1 and IL18RAP, forms a signaling ternary complex which activates NF-kappa-B, triggering synthesis of inflammatory mediators. Synergizes with IL12/interleukin-12 to induce IFNG synthesis from T-helper 1 (Th1) cells and natural killer (NK) cells. Involved in transduction of inflammation downstream of pyroptosis: its mature form is specifically released in the extracellular milieu by passing through the gasdermin-D (GSDMD) pore. The chain is Interleukin-18 (IL18) from Boselaphus tragocamelus (Nilgai).